The following is a 67-amino-acid chain: ATP synthase F(0) complex subunit 8 (67 aa).

A helical transmembrane segment spans residues 8 to 24; sequence TWFTTILATITTLFILF. Lysine 54 carries the post-translational modification N6-acetyllysine; alternate. Lysine 54 carries the post-translational modification N6-succinyllysine; alternate. N6-acetyllysine is present on lysine 57.

It belongs to the ATPase protein 8 family. As to quaternary structure, component of the ATP synthase complex composed at least of ATP5F1A/subunit alpha, ATP5F1B/subunit beta, ATP5MC1/subunit c (homooctomer), MT-ATP6/subunit a, MT-ATP8/subunit 8, ATP5ME/subunit e, ATP5MF/subunit f, ATP5MG/subunit g, ATP5MK/subunit k, ATP5MJ/subunit j, ATP5F1C/subunit gamma, ATP5F1D/subunit delta, ATP5F1E/subunit epsilon, ATP5PF/subunit F6, ATP5PB/subunit b, ATP5PD/subunit d, ATP5PO/subunit OSCP. ATP synthase complex consists of a soluble F(1) head domain (subunits alpha(3) and beta(3)) - the catalytic core - and a membrane F(0) domain - the membrane proton channel (subunits c, a, 8, e, f, g, k and j). These two domains are linked by a central stalk (subunits gamma, delta, and epsilon) rotating inside the F1 region and a stationary peripheral stalk (subunits F6, b, d, and OSCP). Interacts with PRICKLE3.

The protein resides in the mitochondrion membrane. Its function is as follows. Subunit 8, of the mitochondrial membrane ATP synthase complex (F(1)F(0) ATP synthase or Complex V) that produces ATP from ADP in the presence of a proton gradient across the membrane which is generated by electron transport complexes of the respiratory chain. ATP synthase complex consist of a soluble F(1) head domain - the catalytic core - and a membrane F(1) domain - the membrane proton channel. These two domains are linked by a central stalk rotating inside the F(1) region and a stationary peripheral stalk. During catalysis, ATP synthesis in the catalytic domain of F(1) is coupled via a rotary mechanism of the central stalk subunits to proton translocation. In vivo, can only synthesize ATP although its ATP hydrolase activity can be activated artificially in vitro. Part of the complex F(0) domain. The protein is ATP synthase F(0) complex subunit 8 of Talpa europaea (European mole).